The following is a 245-amino-acid chain: Eukaryotic translation initiation factor 6 (245 aa).

The protein belongs to the eIF-6 family. As to quaternary structure, monomer. Associates with the 60S ribosomal subunit.

It is found in the cytoplasm. The protein resides in the nucleus. Its subcellular location is the nucleolus. Binds to the 60S ribosomal subunit and prevents its association with the 40S ribosomal subunit to form the 80S initiation complex in the cytoplasm. May also be involved in ribosome biogenesis. The polypeptide is Eukaryotic translation initiation factor 6 (eif6) (Xenopus laevis (African clawed frog)).